The following is a 158-amino-acid chain: Putative metalloproteinase inhibitor tag-225 (158 aa).

The first 20 residues, 1–20, serve as a signal peptide directing secretion; it reads MQNLSLSLVILSVLIAVTLA. C21 is a binding site for Zn(2+). The involved in metalloproteinase-binding stretch occupies residues 21–25; sequence CKCRE. 3 cysteine pairs are disulfide-bonded: C21–C96, C23–C123, and C33–C158. Residues 21–158 form the NTR domain; that stretch reads CKCREQSTKE…LQSQVKSIKC (138 aa). N-linked (GlcNAc...) asparagine glycosylation occurs at N79. The interval 93–94 is involved in metalloproteinase-binding; that stretch reads AP.

Belongs to the protease inhibitor I35 (TIMP) family.

It localises to the secreted. Its function is as follows. Complexes with metalloproteinases and irreversibly inactivates them by binding to their catalytic zinc cofactor. This chain is Putative metalloproteinase inhibitor tag-225 (tag-225), found in Caenorhabditis elegans.